A 145-amino-acid polypeptide reads, in one-letter code: Transcriptional regulator MraZ (145 aa).

SpoVT-AbrB domains follow at residues 5 to 50 and 81 to 124; these read TFNH…ALPQ and AHEV…DRAA.

It belongs to the MraZ family. Forms oligomers.

It is found in the cytoplasm. The protein resides in the nucleoid. The chain is Transcriptional regulator MraZ from Anaeromyxobacter dehalogenans (strain 2CP-1 / ATCC BAA-258).